The primary structure comprises 355 residues: Peptide chain release factor 1 (355 aa).

N5-methylglutamine is present on Gln233.

Belongs to the prokaryotic/mitochondrial release factor family. In terms of processing, methylated by PrmC. Methylation increases the termination efficiency of RF1.

Its subcellular location is the cytoplasm. Its function is as follows. Peptide chain release factor 1 directs the termination of translation in response to the peptide chain termination codons UAG and UAA. In Desulforudis audaxviator (strain MP104C), this protein is Peptide chain release factor 1.